The chain runs to 777 residues: Ribosome-releasing factor 2, mitochondrial (777 aa).

The 286-residue stretch at Ala68–Glu353 folds into the tr-type G domain. GTP contacts are provided by residues Ala77 to Thr84, Asp141 to His145, and Asn195 to Asp198.

Belongs to the TRAFAC class translation factor GTPase superfamily. Classic translation factor GTPase family. EF-G/EF-2 subfamily.

Its subcellular location is the mitochondrion. It catalyses the reaction GTP + H2O = GDP + phosphate + H(+). Functionally, mitochondrial GTPase that mediates the disassembly of ribosomes from messenger RNA at the termination of mitochondrial protein biosynthesis. Acts in collaboration with MRRF. GTP hydrolysis follows the ribosome disassembly and probably occurs on the ribosome large subunit. Not involved in the GTP-dependent ribosomal translocation step during translation elongation. The polypeptide is Ribosome-releasing factor 2, mitochondrial (Bos taurus (Bovine)).